Reading from the N-terminus, the 1169-residue chain is MENEEPVLSAPDVQVVDPDVRAHVYSLVTALGGFNGEDADKYVLGDDALACLRDIKRWLKLYDEKHNRMDVARCLGEANLVNGDLLPILAVWANSKKQTKYMSRIALACLELLVPLTWPVELHGELTINHHRHIPYIQHVHVSYKRGLLSHASTSYLRTIIRVGIPSMAIPRSERTTRDEGILKLLLYLLRNIALITPNTRLAAEGDEEETSRSATINAFQDQDVFALLLTMCSNVGDDFTMQDVALLEILFHLIRGVSVEKLFMDDAQRTAKRTDELDDLLRQESSLRREYAKNAPTRHGRFGTMIWVKRDDAKYSTVSGQNVLKDGQATLQKMDETKKWNKPLIRRKPQDLTVHNDFSTPVHLNSTASNNLRMFVEEFLDSGFNPLLTHVRKAIEREADRVMDINTRQFLYTTAWFLEAERARRARQRKKHAESEKPAKELEPDSFGLVAGVLNQETFVFLNRAMQYALDNKDWEDLNAGMRCFTQILLTVQDMAQSPLEEDQEIAENIQNRIFYEETTHDRVLAVIRGYKDQPFGYLDACTELTHVFLRMLERYSKENLDMQVRSRRRARRKAKDVEGTGNDENDEENGSEDEDRLEAERVSKERKFDFRRFAAKFCNQKCVDTFVAFTKHYKELNTEQLKRAHRYFYRIAFKQELSVLLFRLDIINLFYRMIKGPGALDSSKPIFKEWEEFVRQIIRRLTKRLDQRPALFVELLFSKINATTFYLEYGHERQTVTRARKAPAELEIDPRQAHTIEEKISIMVPALVLDGEEDLVTWVSDVLESAVEEREAWETQEKALRDAGAENSKIPNPMISVKARDDACQQAMFSNAKLRLLMTLVKFERLGAEDVPGAAWIIPSAPRAQDLREMKSFIDKYFEKAKRGTLGRDPRELIRRKYGGGKTASDNQHNPDIQFGDDSEGEDEVPDGPLFPPNPRAAPNPANKPTKKKKRKERNPDDEDEDDSVDEETLEERRRARLENSRARLAKIKSDLYVHASDEDTDEEGDKEFFLLEEQRRREQAKRIKHALLTGMTEDGDGSTNKKGQRKRQTTRNRTGEAKSKRQRRGKQADEVDEDDDVVMGNMDAPSPMSDREGTPSGEEDDGFNFDDDLVFSRDREKLLGSAGNEEKDSNRPDKAMAQDEDDDDAPIVAANRRRMRAGFVVDSDSE.

2 disordered regions span residues 573–600 and 900–1150; these read RRKA…DRLE and YGGG…DAPI. Composition is skewed to acidic residues over residues 583 to 599 and 917 to 928; these read GNDE…EDRL and FGDDSEGEDEVP. Over residues 931–940 the composition is skewed to pro residues; it reads PLFPPNPRAA. A compositionally biased stretch (acidic residues) spans 958–972; it reads PDDEDEDDSVDEETL. Basic and acidic residues-rich tracts occupy residues 973–1000 and 1009–1024; these read EERR…HASD and KEFF…EQAK. Over residues 1100–1112 the composition is skewed to acidic residues; the sequence is GEEDDGFNFDDDL. The segment covering 1113 to 1140 has biased composition (basic and acidic residues); that stretch reads VFSRDREKLLGSAGNEEKDSNRPDKAMA.

It belongs to the timeless family.

It localises to the nucleus. Functionally, involved in chromosome segregation during meiosis and DNA damage repair. This chain is Topoisomerase 1-associated factor 1 (tof1), found in Aspergillus niger (strain ATCC MYA-4892 / CBS 513.88 / FGSC A1513).